The primary structure comprises 735 residues: Alpha-adducin (735 aa).

Met-1 is modified (N-acetylmethionine). Residues Met-1 to Thr-11 are compositionally biased toward low complexity. The disordered stretch occupies residues Met-1 to Lys-21. Position 12 is a phosphoserine (Ser-12). Position 59 is a phosphoserine; by PKA (Ser-59). A Phosphoserine modification is found at Ser-64. Thr-331 is subject to Phosphothreonine. Residues Ser-334, Ser-353, and Ser-355 each carry the phosphoserine modification. Thr-358 is subject to Phosphothreonine. Phosphoserine is present on residues Ser-364 and Ser-366. Position 408 is a phosphoserine; by PKA (Ser-408). Disordered regions lie at residues Gly-418–Pro-486 and Arg-576–Ser-735. Ser-427 carries the phosphoserine modification. Thr-429 carries the post-translational modification Phosphothreonine. Phosphoserine is present on Ser-431. Ser-436 is subject to Phosphoserine; by PKA. Thr-445 is subject to Phosphothreonine; by ROCK2. 2 positions are modified to phosphoserine: Ser-464 and Ser-465. Thr-480 carries the phosphothreonine; by ROCK2 modification. Ser-481 bears the Phosphoserine; by PKA mark. Positions Arg-576–Pro-601 are enriched in basic and acidic residues. Phosphoserine is present on residues Ser-586, Ser-600, and Ser-605. Thr-610 carries the post-translational modification Phosphothreonine. Ser-613 is subject to Phosphoserine. Thr-614 bears the Phosphothreonine mark. Residues Glu-678 to Ser-712 are compositionally biased toward low complexity. Phosphoserine occurs at positions 705, 708, and 712. Residues Pro-713 to Ser-735 show a composition bias toward basic residues. At Ser-714 the chain carries Phosphoserine; by PKC. The interval Lys-715–Lys-732 is interaction with calmodulin. Position 724 is a phosphoserine; by PKA and PKC (Ser-724).

It belongs to the aldolase class II family. Adducin subfamily. As to quaternary structure, heterodimer of an alpha and a beta subunit or an alpha and a gamma subunit.

It is found in the cytoplasm. It localises to the cytoskeleton. Its subcellular location is the cell membrane. Functionally, membrane-cytoskeleton-associated protein that promotes the assembly of the spectrin-actin network. Binds to calmodulin. The protein is Alpha-adducin (Add1) of Rattus norvegicus (Rat).